Reading from the N-terminus, the 483-residue chain is UDP-N-acetylmuramoyl-L-alanyl-D-glutamate--2,6-diaminopimelate ligase (483 aa).

A UDP-N-acetyl-alpha-D-muramoyl-L-alanyl-D-glutamate-binding site is contributed by Ser-30. 109 to 115 (GTNGKTT) contributes to the ATP binding site. UDP-N-acetyl-alpha-D-muramoyl-L-alanyl-D-glutamate is bound by residues 151-152 (TT), Ser-178, and Arg-186. The residue at position 218 (Lys-218) is an N6-carboxylysine. Meso-2,6-diaminopimelate is bound by residues Arg-380, 403 to 406 (DNPR), Gly-453, and Glu-457. Residues 403–406 (DNPR) carry the Meso-diaminopimelate recognition motif motif.

The protein belongs to the MurCDEF family. MurE subfamily. Mg(2+) serves as cofactor. In terms of processing, carboxylation is probably crucial for Mg(2+) binding and, consequently, for the gamma-phosphate positioning of ATP.

Its subcellular location is the cytoplasm. The enzyme catalyses UDP-N-acetyl-alpha-D-muramoyl-L-alanyl-D-glutamate + meso-2,6-diaminopimelate + ATP = UDP-N-acetyl-alpha-D-muramoyl-L-alanyl-gamma-D-glutamyl-meso-2,6-diaminopimelate + ADP + phosphate + H(+). It participates in cell wall biogenesis; peptidoglycan biosynthesis. Its function is as follows. Catalyzes the addition of meso-diaminopimelic acid to the nucleotide precursor UDP-N-acetylmuramoyl-L-alanyl-D-glutamate (UMAG) in the biosynthesis of bacterial cell-wall peptidoglycan. In Chlamydia caviae (strain ATCC VR-813 / DSM 19441 / 03DC25 / GPIC) (Chlamydophila caviae), this protein is UDP-N-acetylmuramoyl-L-alanyl-D-glutamate--2,6-diaminopimelate ligase.